Here is a 396-residue protein sequence, read N- to C-terminus: Elongation factor Tu 2 (396 aa).

Residues 10–206 (KPHCNVGTIG…AVDDYIPQPE (197 aa)) form the tr-type G domain. Residues 19-26 (GHVDHGKT) are G1. 19–26 (GHVDHGKT) is a GTP binding site. Residue T26 participates in Mg(2+) binding. The interval 60-64 (GITIS) is G2. The tract at residues 81-84 (DCPG) is G3. Residues 81-85 (DCPGH) and 136-139 (NKCD) contribute to the GTP site. Positions 136–139 (NKCD) are G4. The interval 174–176 (SAL) is G5.

The protein belongs to the TRAFAC class translation factor GTPase superfamily. Classic translation factor GTPase family. EF-Tu/EF-1A subfamily. Monomer.

The protein localises to the cytoplasm. It catalyses the reaction GTP + H2O = GDP + phosphate + H(+). GTP hydrolase that promotes the GTP-dependent binding of aminoacyl-tRNA to the A-site of ribosomes during protein biosynthesis. This is Elongation factor Tu 2 from Rhodospirillum rubrum (strain ATCC 11170 / ATH 1.1.1 / DSM 467 / LMG 4362 / NCIMB 8255 / S1).